The chain runs to 125 residues: Ribosome-binding factor A (125 aa).

The protein belongs to the RbfA family. In terms of assembly, monomer. Binds 30S ribosomal subunits, but not 50S ribosomal subunits or 70S ribosomes.

The protein resides in the cytoplasm. One of several proteins that assist in the late maturation steps of the functional core of the 30S ribosomal subunit. Associates with free 30S ribosomal subunits (but not with 30S subunits that are part of 70S ribosomes or polysomes). Required for efficient processing of 16S rRNA. May interact with the 5'-terminal helix region of 16S rRNA. In Methylobacillus flagellatus (strain ATCC 51484 / DSM 6875 / VKM B-1610 / KT), this protein is Ribosome-binding factor A.